A 1090-amino-acid polypeptide reads, in one-letter code: Solute carrier family 38 member 10 (1090 aa).

A run of 10 helical transmembrane segments spans residues 9 to 31 (WGLITNVVNSIVGVSVLTMPFCF), 36 to 58 (IVLGALLLVFCSWMTHQSCMFLV), 84 to 104 (LVETSMIGLMLGSCITFYVVI), 123 to 143 (TVRVFLLFAVSLFIVLPLSLQ), 153 to 173 (FSAMALLFYTVFMFVIVLSSL), 229 to 249 (IFASSLNVVTAFYVMVGFFGY), 272 to 292 (MIRVGFVMSVAVGFPMMILPC), 323 to 343 (VLTLSVVFGTMVGGVMIPNVE), 345 to 365 (ILGFTGATMGSLICFICPALI), and 378 to 398 (VVLWVGLGILVVSTLTTLSVT). Ser441 carries the post-translational modification Phosphoserine. 6 stretches are compositionally biased toward basic and acidic residues: residues 441 to 454 (SQEKLKPAEDKEVL), 493 to 508 (EAHRHEPPIPHDKVVV), 517 to 528 (PEEKKPPPRLPD), 544 to 560 (ESEKEKQEPERGGEGKR), 587 to 596 (PRKEDSRPGN), and 607 to 623 (DSVELKALAADDGREPA). 3 disordered regions span residues 441–675 (SQEK…AGSK), 729–831 (EIRQ…IDLR), and 857–1037 (KAAP…ELAP). Phosphoserine occurs at positions 608 and 636. 3 stretches are compositionally biased toward basic and acidic residues: residues 654–665 (EAAEQREKKEAE), 729–744 (EIRQQRQEGEEDKPKP), and 758–767 (GQEEEAEHAG). Thr769 carries the post-translational modification Phosphothreonine. Phosphoserine is present on Ser887. The segment covering 923 to 936 (RQSGPTKAPVQTQA) has biased composition (polar residues). Basic and acidic residues-rich tracts occupy residues 954–973 (PEVRSEAPRAVHIPPEEQHK), 1004–1013 (ENAKPNRDLK), and 1026–1037 (DLASHPEQELAP).

Belongs to the amino acid/polyamine transporter 2 family. In terms of tissue distribution, expressed in neurons, astrocytes and epithelial cells scattered throughout the central nervous system structures including striatum, ependyma, cerebral cortex, hippocampus, hypothalamus, thalamus, pons, and cerebellum (at protein level). Highly expressed in paraventricular hypothalamic nucleus, suprachiasmatic nucleus, anterior hypothalamic area central part, in lateral ventricule and in dorsal 3rd ventricule (at protein level). Expressed in choroid plexus epithelial cells (at protein level).

The protein localises to the membrane. The catalysed reaction is L-glutamate(out) = L-glutamate(in). It carries out the reaction L-glutamine(out) = L-glutamine(in). It catalyses the reaction L-alanine(in) = L-alanine(out). The enzyme catalyses L-serine(in) = L-serine(out). The catalysed reaction is L-leucine(in) = L-leucine(out). Its function is as follows. Facilitates bidirectional transport of amino acids. May act as a glutamate sensor that regulates glutamate-glutamine cycle and mTOR signaling in the brain. The transport mechanism remains to be elucidated. This Mus musculus (Mouse) protein is Solute carrier family 38 member 10.